We begin with the raw amino-acid sequence, 316 residues long: 4-hydroxy-3-methylbut-2-enyl diphosphate reductase (316 aa).

Residue C12 coordinates [4Fe-4S] cluster. 2 residues coordinate (2E)-4-hydroxy-3-methylbut-2-enyl diphosphate: H41 and H74. Dimethylallyl diphosphate-binding residues include H41 and H74. Isopentenyl diphosphate contacts are provided by H41 and H74. Residue C96 participates in [4Fe-4S] cluster binding. Position 124 (H124) interacts with (2E)-4-hydroxy-3-methylbut-2-enyl diphosphate. H124 contacts dimethylallyl diphosphate. An isopentenyl diphosphate-binding site is contributed by H124. E126 functions as the Proton donor in the catalytic mechanism. T167 contacts (2E)-4-hydroxy-3-methylbut-2-enyl diphosphate. C197 contacts [4Fe-4S] cluster. The (2E)-4-hydroxy-3-methylbut-2-enyl diphosphate site is built by S225, S226, N227, and S269. S225, S226, N227, and S269 together coordinate dimethylallyl diphosphate. The isopentenyl diphosphate site is built by S225, S226, N227, and S269.

This sequence belongs to the IspH family. Homodimer. The cofactor is [4Fe-4S] cluster.

It carries out the reaction isopentenyl diphosphate + 2 oxidized [2Fe-2S]-[ferredoxin] + H2O = (2E)-4-hydroxy-3-methylbut-2-enyl diphosphate + 2 reduced [2Fe-2S]-[ferredoxin] + 2 H(+). The catalysed reaction is dimethylallyl diphosphate + 2 oxidized [2Fe-2S]-[ferredoxin] + H2O = (2E)-4-hydroxy-3-methylbut-2-enyl diphosphate + 2 reduced [2Fe-2S]-[ferredoxin] + 2 H(+). Its pathway is isoprenoid biosynthesis; dimethylallyl diphosphate biosynthesis; dimethylallyl diphosphate from (2E)-4-hydroxy-3-methylbutenyl diphosphate: step 1/1. It participates in isoprenoid biosynthesis; isopentenyl diphosphate biosynthesis via DXP pathway; isopentenyl diphosphate from 1-deoxy-D-xylulose 5-phosphate: step 6/6. In terms of biological role, catalyzes the conversion of 1-hydroxy-2-methyl-2-(E)-butenyl 4-diphosphate (HMBPP) into a mixture of isopentenyl diphosphate (IPP) and dimethylallyl diphosphate (DMAPP). Acts in the terminal step of the DOXP/MEP pathway for isoprenoid precursor biosynthesis. This Pectobacterium atrosepticum (strain SCRI 1043 / ATCC BAA-672) (Erwinia carotovora subsp. atroseptica) protein is 4-hydroxy-3-methylbut-2-enyl diphosphate reductase.